The primary structure comprises 706 residues: Transcription factor 12 (706 aa).

Residues 25 to 109 form a disordered region; it reads AMFSPPVNSG…TPFMNSNLIG (85 aa). 2 stretches are compositionally biased toward polar residues: residues 30–48 and 56–76; these read PVNS…QFSG and GTTS…SRGF. Ser-47, Ser-67, and Ser-79 each carry phosphoserine. Residues 81-93 show a composition bias toward basic and acidic residues; the sequence is HYSDHLNDSRLGT. Ser-98 carries the post-translational modification Phosphoserine. Lys-110 participates in a covalent cross-link: Glycyl lysine isopeptide (Lys-Gly) (interchain with G-Cter in SUMO2). Residues Ser-116 and Ser-124 each carry the phosphoserine modification. The tract at residues 119–140 is leucine-zipper; sequence LYSRDSGLSGCQSSLLRQDLGL. Disordered stretches follow at residues 140–222 and 249–313; these read LGSP…SMFA and FGGI…ASHT. A compositionally biased stretch (polar residues) spans 144 to 163; it reads AQLSSSGKPGTPYYSFSATS. A Glycyl lysine isopeptide (Lys-Gly) (interchain with G-Cter in SUMO2) cross-link involves residue Lys-181. The short motif at 181–188 is the Nuclear localization signal element; that stretch reads KKVRKVPP. Over residues 256–269 the composition is skewed to low complexity; that stretch reads STSHMSQSSSYGSL. The span at 282-306 shows a compositional bias: polar residues; it reads VSPTDINTSLPPMSSFHRGSTSSSP. Residue Thr-313 is modified to Phosphothreonine. Ser-333 carries the phosphoserine modification. 2 disordered regions span residues 349–392 and 520–604; these read PDHT…YENS and HKTP…ERRM. Low complexity predominate over residues 352-363; that stretch reads TSSSFPSNPSTP. Composition is skewed to polar residues over residues 364–376 and 383–392; these read VGSP…TSQW and APSSPSYENS. Ser-392 carries the phosphoserine modification. Basic and acidic residues-rich tracts occupy residues 542–554 and 560–575; these read IKTE…ENLH and DDMK…DIKV. Residue Lys-543 forms a Glycyl lysine isopeptide (Lys-Gly) (interchain with G-Cter in SUMO2) linkage. Phosphoserine is present on Ser-564. A Glycyl lysine isopeptide (Lys-Gly) (interchain with G-Cter in SUMO2) cross-link involves residue Lys-574. Thr-581 carries the post-translational modification Phosphothreonine. A phosphoserine mark is found at Ser-582 and Ser-583. The span at 592-604 shows a compositional bias: basic and acidic residues; sequence PEQKIEREKERRM. In terms of domain architecture, bHLH spans 601-654; sequence ERRMANNARERLRVRDINEAFKELGRMCQLHLKSEKPQTKLLILHQAVAVILSL. Glycyl lysine isopeptide (Lys-Gly) (interchain with G-Cter in SUMO2) cross-links involve residues Lys-633 and Lys-677. The tract at residues 656–679 is class A specific domain; it reads QQVRERNLNPKAACLKRREEEKVS. The interval 674–706 is disordered; sequence EEEKVSAASAEPPNTLPGAHPGLSESTNPMGHL. Over residues 697 to 706 the composition is skewed to polar residues; that stretch reads SESTNPMGHL.

In terms of assembly, efficient DNA binding requires dimerization with another bHLH protein. Forms homo- or heterooligomers with myogenin, E12 and ITF2 proteins and RUNX1T1. Interacts with PTF1A. Interacts with NEUROD2. Interacts with BHLHA9. Widely expressed.

Its subcellular location is the nucleus. Transcriptional regulator. Involved in the initiation of neuronal differentiation. Activates transcription by binding to the E box (5'-CANNTG-3'). May be involved in the functional network that regulates the development of the GnRH axis. This chain is Transcription factor 12 (Tcf12), found in Mus musculus (Mouse).